A 375-amino-acid polypeptide reads, in one-letter code: UDP-N-acetylglucosamine--N-acetylmuramyl-(pentapeptide) pyrophosphoryl-undecaprenol N-acetylglucosamine transferase (375 aa).

Residues 13-15 (TGG), N124, R165, S193, and Q294 each bind UDP-N-acetyl-alpha-D-glucosamine.

It belongs to the glycosyltransferase 28 family. MurG subfamily.

It localises to the cell inner membrane. It catalyses the reaction di-trans,octa-cis-undecaprenyl diphospho-N-acetyl-alpha-D-muramoyl-L-alanyl-D-glutamyl-meso-2,6-diaminopimeloyl-D-alanyl-D-alanine + UDP-N-acetyl-alpha-D-glucosamine = di-trans,octa-cis-undecaprenyl diphospho-[N-acetyl-alpha-D-glucosaminyl-(1-&gt;4)]-N-acetyl-alpha-D-muramoyl-L-alanyl-D-glutamyl-meso-2,6-diaminopimeloyl-D-alanyl-D-alanine + UDP + H(+). The protein operates within cell wall biogenesis; peptidoglycan biosynthesis. Cell wall formation. Catalyzes the transfer of a GlcNAc subunit on undecaprenyl-pyrophosphoryl-MurNAc-pentapeptide (lipid intermediate I) to form undecaprenyl-pyrophosphoryl-MurNAc-(pentapeptide)GlcNAc (lipid intermediate II). The chain is UDP-N-acetylglucosamine--N-acetylmuramyl-(pentapeptide) pyrophosphoryl-undecaprenol N-acetylglucosamine transferase from Chelativorans sp. (strain BNC1).